Consider the following 97-residue polypeptide: MFTFDLQLFAHKKGVGSSKNGRDSQSKRLGVKRYDGQIVTAGNILVRQRGTKIHPGQNVMIGGDDTLFAIIDGRVKFERKGRDKKQVSVYPLETMTM.

Positions 1–9 are excised as a propeptide; the sequence is MFTFDLQLF.

The protein belongs to the bacterial ribosomal protein bL27 family. The N-terminus is cleaved by ribosomal processing cysteine protease Prp.

The polypeptide is Large ribosomal subunit protein bL27 (Syntrophomonas wolfei subsp. wolfei (strain DSM 2245B / Goettingen)).